A 439-amino-acid chain; its full sequence is Dolichyl-diphosphooligosaccharide--protein glycosyltransferase 48 kDa subunit (439 aa).

An N-terminal signal peptide occupies residues 1–26; sequence MATRAARVWSGWWLLLLPLLGLAGAS. The Lumenal portion of the chain corresponds to 27–409; it reads GPRTLVLLDN…QYERFIPSAY (383 aa). The helical transmembrane segment at 410-430 threads the bilayer; the sequence is PYYASAFSMMLGLFIFSVVFL. At 431 to 439 the chain is on the cytoplasmic side; that stretch reads HMKEKEKSD.

The protein belongs to the DDOST 48 kDa subunit family. In terms of assembly, component of the oligosaccharyltransferase (OST) complex. OST exists in two different complex forms which contain common core subunits RPN1, RPN2, OST48, OST4, DAD1 and TMEM258, either STT3A or STT3B as catalytic subunits, and form-specific accessory subunits. STT3A complex assembly occurs through the formation of 3 subcomplexes. Subcomplex 1 contains RPN1 and TMEM258, subcomplex 2 contains the STT3A-specific subunits STT3A, DC2/OSTC, and KCP2 as well as the core subunit OST4, and subcomplex 3 contains RPN2, DAD1, and OST48. The STT3A complex can form stable complexes with the Sec61 complex or with both the Sec61 and TRAP complexes. Interacts with SMIM22.

It localises to the endoplasmic reticulum membrane. Its pathway is protein modification; protein glycosylation. Functionally, subunit of the oligosaccharyl transferase (OST) complex that catalyzes the initial transfer of a defined glycan (Glc(3)Man(9)GlcNAc(2) in eukaryotes) from the lipid carrier dolichol-pyrophosphate to an asparagine residue within an Asn-X-Ser/Thr consensus motif in nascent polypeptide chains, the first step in protein N-glycosylation. N-glycosylation occurs cotranslationally and the complex associates with the Sec61 complex at the channel-forming translocon complex that mediates protein translocation across the endoplasmic reticulum (ER). All subunits are required for a maximal enzyme activity. Required for the assembly of both SST3A- and SS3B-containing OST complexes. The polypeptide is Dolichyl-diphosphooligosaccharide--protein glycosyltransferase 48 kDa subunit (Bos taurus (Bovine)).